Consider the following 374-residue polypeptide: uncharacterized protein (374 aa).

The first 26 residues, 1-26, serve as a signal peptide directing secretion; that stretch reads MNNLIKAYAAGVMSAAFLFGSEGRVR.

This is an uncharacterized protein from Treponema pallidum (strain Nichols).